The following is a 155-amino-acid chain: Perlucin (155 aa).

Intrachain disulfides connect cysteine 2/cysteine 13, cysteine 30/cysteine 127, and cysteine 102/cysteine 119. The 120-residue stretch at 9–128 folds into the C-type lectin domain; the sequence is NRRSCYWFST…CQKPSHFICE (120 aa). Asparagine 84 carries N-linked (GlcNAc...) asparagine glycosylation. Tandem repeats lie at residues 136–145 and 146–155.

Glycosylated.

In terms of biological role, may promote nucleation and/or growth of calcium carbonate crystals. Binds to D-galactose and D-mannose/D-glucose. In Haliotis laevigata (Smooth Australian abalone), this protein is Perlucin.